Reading from the N-terminus, the 280-residue chain is Fructose-1,6-bisphosphatase class 1 (280 aa).

Residues Glu64, Asp83, Leu85, and Asp86 each contribute to the Mg(2+) site. Residues 86–89, Tyr189, and Lys220 contribute to the substrate site; that span reads DGSS. Glu226 contacts Mg(2+).

It belongs to the FBPase class 1 family. In terms of assembly, homotetramer. Requires Mg(2+) as cofactor.

It is found in the cytoplasm. It catalyses the reaction beta-D-fructose 1,6-bisphosphate + H2O = beta-D-fructose 6-phosphate + phosphate. It participates in carbohydrate biosynthesis; gluconeogenesis. This Campylobacter jejuni subsp. jejuni serotype O:6 (strain 81116 / NCTC 11828) protein is Fructose-1,6-bisphosphatase class 1.